The following is a 187-amino-acid chain: Ribosome-recycling factor (187 aa).

It belongs to the RRF family.

The protein localises to the cytoplasm. In terms of biological role, responsible for the release of ribosomes from messenger RNA at the termination of protein biosynthesis. May increase the efficiency of translation by recycling ribosomes from one round of translation to another. The polypeptide is Ribosome-recycling factor (Mycoplasmopsis pulmonis (strain UAB CTIP) (Mycoplasma pulmonis)).